The chain runs to 316 residues: Thymidylate synthase (316 aa).

Residues Arg-23 and 178–179 (RR) each bind dUMP. Residue Cys-198 is the Nucleophile of the active site. Residues 218-221 (RSGD), Asn-229, and 259-261 (HIY) contribute to the dUMP site. Position 221 (Asp-221) interacts with (6R)-5,10-methylene-5,6,7,8-tetrahydrofolate. A (6R)-5,10-methylene-5,6,7,8-tetrahydrofolate-binding site is contributed by Ala-315.

Belongs to the thymidylate synthase family. Bacterial-type ThyA subfamily. Homodimer.

The protein localises to the cytoplasm. The enzyme catalyses dUMP + (6R)-5,10-methylene-5,6,7,8-tetrahydrofolate = 7,8-dihydrofolate + dTMP. Its pathway is pyrimidine metabolism; dTTP biosynthesis. Catalyzes the reductive methylation of 2'-deoxyuridine-5'-monophosphate (dUMP) to 2'-deoxythymidine-5'-monophosphate (dTMP) while utilizing 5,10-methylenetetrahydrofolate (mTHF) as the methyl donor and reductant in the reaction, yielding dihydrofolate (DHF) as a by-product. This enzymatic reaction provides an intracellular de novo source of dTMP, an essential precursor for DNA biosynthesis. This chain is Thymidylate synthase, found in Latilactobacillus sakei subsp. sakei (strain 23K) (Lactobacillus sakei subsp. sakei).